The sequence spans 162 residues: Large ribosomal subunit protein uL30 (162 aa).

Belongs to the universal ribosomal protein uL30 family. In terms of assembly, part of the 50S ribosomal subunit.

This is Large ribosomal subunit protein uL30 from Korarchaeum cryptofilum (strain OPF8).